The following is a 258-amino-acid chain: Tryptophan synthase alpha chain (258 aa).

Catalysis depends on proton acceptor residues Glu47 and Asp58.

This sequence belongs to the TrpA family. Tetramer of two alpha and two beta chains.

It carries out the reaction (1S,2R)-1-C-(indol-3-yl)glycerol 3-phosphate + L-serine = D-glyceraldehyde 3-phosphate + L-tryptophan + H2O. It functions in the pathway amino-acid biosynthesis; L-tryptophan biosynthesis; L-tryptophan from chorismate: step 5/5. The alpha subunit is responsible for the aldol cleavage of indoleglycerol phosphate to indole and glyceraldehyde 3-phosphate. The polypeptide is Tryptophan synthase alpha chain (Bacillus cereus (strain ATCC 14579 / DSM 31 / CCUG 7414 / JCM 2152 / NBRC 15305 / NCIMB 9373 / NCTC 2599 / NRRL B-3711)).